Reading from the N-terminus, the 219-residue chain is Carboxypeptidase Y inhibitor (219 aa).

M1 is modified (N-acetylmethionine).

The protein belongs to the phosphatidylethanolamine-binding protein family. Monomer.

It localises to the cytoplasm. In terms of biological role, specific and potent inhibitor of carboxypeptidase Y. This is Carboxypeptidase Y inhibitor (TFS1) from Saccharomyces cerevisiae (strain ATCC 204508 / S288c) (Baker's yeast).